The following is a 370-amino-acid chain: Spermidine/putrescine import ATP-binding protein PotA (370 aa).

In terms of domain architecture, ABC transporter spans 11–241 (IELRSITKSY…PKNLFVAKFI (231 aa)). An ATP-binding site is contributed by 43–50 (GPSGCGKT).

This sequence belongs to the ABC transporter superfamily. Spermidine/putrescine importer (TC 3.A.1.11.1) family. In terms of assembly, the complex is composed of two ATP-binding proteins (PotA), two transmembrane proteins (PotB and PotC) and a solute-binding protein (PotD).

The protein localises to the cell inner membrane. It carries out the reaction ATP + H2O + polyamine-[polyamine-binding protein]Side 1 = ADP + phosphate + polyamineSide 2 + [polyamine-binding protein]Side 1.. Its function is as follows. Part of the ABC transporter complex PotABCD involved in spermidine/putrescine import. Responsible for energy coupling to the transport system. This is Spermidine/putrescine import ATP-binding protein PotA from Pasteurella multocida (strain Pm70).